The sequence spans 37 residues: Myo-inositol-binding protein (37 aa).

This sequence belongs to the bacterial solute-binding protein 2 family.

Its subcellular location is the periplasm. The chain is Myo-inositol-binding protein from Pseudomonas sp.